A 716-amino-acid polypeptide reads, in one-letter code: Ubiquitin thioesterase zranb1-B (716 aa).

2 RanBP2-type zinc fingers span residues 3 to 33 (DLGLKWSCEYCTYENWPSAIKCTMCRAQRHN) and 82 to 111 (TSSKWSCHMCTYLNWPRAIRCTQCLSQRQQ). 8 residues coordinate Zn(2+): Cys10, Cys13, Cys24, Cys27, Cys88, Cys91, Cys102, and Cys105. Positions 113 to 143 (SQQHSPLSPSETPQTSGSRPSPVTSDPCEEY) are disordered. The span at 118–136 (PLSPSETPQTSGSRPSPVT) shows a compositional bias: polar residues. Residues 152-181 (HAQRWPCSACTYENWPKSLRCVVCDHPKPS) form a RanBP2-type 3 zinc finger. Zn(2+) contacts are provided by Cys158, Cys161, Cys172, and Cys175. Residues 178–228 (PKPSGSPETPQQDSEAESATSPSIVNEQERENVRTAGGGGGGSRGRLRKLS) are disordered. Residues 183-203 (SPETPQQDSEAESATSPSIVN) are compositionally biased toward polar residues. 2 ANK repeats span residues 268-298 (RRSDWLFLNACAGVVEGDLAAVEAYKSSGGD) and 321-348 (FTLVHLAIRFQRQDMLAVLLTEVSQQTA). The OTU domain maps to 440–600 (LYALWNRTAG…RGHFSALVAM (161 aa)). The active-site Nucleophile is the Cys451. The active-site Proton acceptor is the His593.

It belongs to the peptidase C64 family.

It localises to the cytoplasm. Its subcellular location is the nucleus. The enzyme catalyses Thiol-dependent hydrolysis of ester, thioester, amide, peptide and isopeptide bonds formed by the C-terminal Gly of ubiquitin (a 76-residue protein attached to proteins as an intracellular targeting signal).. Its function is as follows. Ubiquitin thioesterase, which specifically hydrolyzes 'Lys-29'-linked and 'Lys-33'-linked diubiquitin. Also cleaves 'Lys-63'-linked chains, but with 40-fold less efficiency compared to 'Lys-29'-linked ones. Positive regulator of the Wnt signaling pathway that deubiquitinates apc protein, a negative regulator of Wnt-mediated transcription. Acts as a regulator of autophagy by mediating deubiquitination of pik3c3/vps34, thereby promoting autophagosome maturation. Plays a role in the regulation of cell morphology and cytoskeletal organization. Required in the stress fiber dynamics and cell migration. The protein is Ubiquitin thioesterase zranb1-B (zranb1b) of Danio rerio (Zebrafish).